Reading from the N-terminus, the 286-residue chain is Phosphoribosylaminoimidazole-succinocarboxamide synthase (286 aa).

It belongs to the SAICAR synthetase family.

It carries out the reaction 5-amino-1-(5-phospho-D-ribosyl)imidazole-4-carboxylate + L-aspartate + ATP = (2S)-2-[5-amino-1-(5-phospho-beta-D-ribosyl)imidazole-4-carboxamido]succinate + ADP + phosphate + 2 H(+). The protein operates within purine metabolism; IMP biosynthesis via de novo pathway; 5-amino-1-(5-phospho-D-ribosyl)imidazole-4-carboxamide from 5-amino-1-(5-phospho-D-ribosyl)imidazole-4-carboxylate: step 1/2. The polypeptide is Phosphoribosylaminoimidazole-succinocarboxamide synthase (Histophilus somni (strain 2336) (Haemophilus somnus)).